An 815-amino-acid polypeptide reads, in one-letter code: Phenylalanine--tRNA ligase beta subunit (815 aa).

The region spanning 40–155 (APPFDKIVVA…EDAPVGQNIR (116 aa)) is the tRNA-binding domain. The B5 domain occupies 406–485 (PQRRPVSLRL…RIYGFERIAA (80 aa)). Mg(2+) is bound by residues Asp-463, Asp-469, Glu-472, and Glu-473. Residues 712 to 814 (SKFPAAVRDL…LGEAFQARLR (103 aa)) enclose the FDX-ACB domain.

It belongs to the phenylalanyl-tRNA synthetase beta subunit family. Type 1 subfamily. Tetramer of two alpha and two beta subunits. Mg(2+) serves as cofactor.

Its subcellular location is the cytoplasm. The enzyme catalyses tRNA(Phe) + L-phenylalanine + ATP = L-phenylalanyl-tRNA(Phe) + AMP + diphosphate + H(+). The polypeptide is Phenylalanine--tRNA ligase beta subunit (Cupriavidus pinatubonensis (strain JMP 134 / LMG 1197) (Cupriavidus necator (strain JMP 134))).